The following is a 522-amino-acid chain: 4-chlorobenzoate--CoA ligase (522 aa).

ATP is bound by residues 161–169, 300–305, and Asn-410; these read TSGTTGLPK and DIYGTT.

This sequence belongs to the ATP-dependent AMP-binding enzyme family. Homodimer. It depends on Mg(2+) as a cofactor.

The catalysed reaction is 4-chlorobenzoate + ATP + CoA = 4-chlorobenzoyl-CoA + AMP + diphosphate. It participates in xenobiotic degradation; 4-chlorobenzoate degradation; 4-hydroxybenzoate from 4-chlorobenzoate: step 2/3. Catalyzes the formation of chlorobenzoyl-CoA via a 2 step reaction. First 4-chlorobenzoate is adenylated by ATP, followed by acyl transfer from the 4-chlorobenzoyl-AMP intermediate to CoA. Benzoate, 4-bromobenzoate, 4-iodobenzoate and 4-fluorobenzoate also act as substrates. Inactive towards 4-nitrobenzoate. In Arthrobacter sp, this protein is 4-chlorobenzoate--CoA ligase.